Here is a 160-residue protein sequence, read N- to C-terminus: UPF0178 protein PA5247 (160 aa).

It belongs to the UPF0178 family.

The sequence is that of UPF0178 protein PA5247 from Pseudomonas aeruginosa (strain ATCC 15692 / DSM 22644 / CIP 104116 / JCM 14847 / LMG 12228 / 1C / PRS 101 / PAO1).